Reading from the N-terminus, the 633-residue chain is Cyclic GMP-AMP synthase-like receptor 1 (633 aa).

3 disordered regions span residues 23–80 (KVHG…HPHT), 107–214 (FKGP…TDPF), and 250–276 (REDD…RPSS). Basic and acidic residues predominate over residues 29–67 (KQHESAHPPRERHTERTATKRSDETKTASRPTASHEGKT). Polar residues predominate over residues 68–80 (HTTNPRGQVHPHT). Basic and acidic residues-rich tracts occupy residues 125-143 (RKPE…DHRT), 176-194 (RKPD…DHRT), and 250-274 (REDD…DDRP). Mg(2+) is bound by residues Glu-353, Asp-355, and Asp-455.

Belongs to the mab-21 family. Mg(2+) is required as a cofactor. It depends on Mn(2+) as a cofactor.

It carries out the reaction UTP + ATP = 2',3'-cUAMP + 2 diphosphate. Functionally, nucleotidyltransferase that catalyzes the formation of cyclic UMP-AMP (2',3'-cUAMP) from ATP and UTP and plays a key role in innate immunity. Acts as a key sensor of double-stranded DNA (dsDNA), the presence of dsDNA in the cytoplasm being a danger signal that triggers the immune responses. Directly binds dsDNA, activating the nucleotidyltransferase activity, leading to synthesis of 2',3'-cUAMP, a second messenger that binds to and activates Sting, thereby triggering the immune response via activation of the NF-kappa-B transcription factor. This is Cyclic GMP-AMP synthase-like receptor 1 from Crassostrea virginica (Eastern oyster).